The sequence spans 628 residues: tRNA uridine 5-carboxymethylaminomethyl modification enzyme MnmG (628 aa).

Residues 14 to 19 (GAGHAG), Val-126, and Ser-181 contribute to the FAD site. Position 273–287 (273–287 (GPRYCPSIEDKVVRF)) interacts with NAD(+). Gln-370 serves as a coordination point for FAD.

The protein belongs to the MnmG family. As to quaternary structure, homodimer. Heterotetramer of two MnmE and two MnmG subunits. It depends on FAD as a cofactor.

The protein resides in the cytoplasm. Its function is as follows. NAD-binding protein involved in the addition of a carboxymethylaminomethyl (cmnm) group at the wobble position (U34) of certain tRNAs, forming tRNA-cmnm(5)s(2)U34. The protein is tRNA uridine 5-carboxymethylaminomethyl modification enzyme MnmG of Bacillus subtilis (strain 168).